The following is a 341-amino-acid chain: tRNA (cytidine(56)-2'-O)-methyltransferase (341 aa).

S-adenosyl-L-methionine contacts are provided by residues Leu-79 and 104–108 (GAEKV). One can recognise an HD domain in the interval 187-294 (IIRHVETVYK…VAHADNLVSM (108 aa)).

It belongs to the aTrm56 family. In terms of assembly, homodimer.

Its subcellular location is the cytoplasm. It catalyses the reaction cytidine(56) in tRNA + S-adenosyl-L-methionine = 2'-O-methylcytidine(56) in tRNA + S-adenosyl-L-homocysteine + H(+). Specifically catalyzes the AdoMet-dependent 2'-O-ribose methylation of cytidine at position 56 in tRNAs. This chain is tRNA (cytidine(56)-2'-O)-methyltransferase, found in Picrophilus torridus (strain ATCC 700027 / DSM 9790 / JCM 10055 / NBRC 100828 / KAW 2/3).